We begin with the raw amino-acid sequence, 509 residues long: Ribonuclease Y (509 aa).

The helical transmembrane segment at 5 to 25 (IIILLSVFCGIFFICFIICSS) threads the bilayer. The KH domain maps to 199 to 259 (TTNIVKLPSD…IRREIATRTL (61 aa)). The region spanning 325-418 (VLAHSIEVAK…VAIADSISAS (94 aa)) is the HD domain.

Belongs to the RNase Y family.

It is found in the cell membrane. Functionally, endoribonuclease that initiates mRNA decay. This Mycoplasma capricolum subsp. capricolum (strain California kid / ATCC 27343 / NCTC 10154) protein is Ribonuclease Y.